A 290-amino-acid polypeptide reads, in one-letter code: Lipoyl synthase 2 (290 aa).

[4Fe-4S] cluster contacts are provided by Cys-37, Cys-42, Cys-48, Cys-63, Cys-67, Cys-70, and Ser-283. Residues 49–272 (YGQKTATFLL…GNIARELGFS (224 aa)) form the Radical SAM core domain.

This sequence belongs to the radical SAM superfamily. Lipoyl synthase family. The cofactor is [4Fe-4S] cluster.

Its subcellular location is the cytoplasm. It catalyses the reaction [[Fe-S] cluster scaffold protein carrying a second [4Fe-4S](2+) cluster] + N(6)-octanoyl-L-lysyl-[protein] + 2 oxidized [2Fe-2S]-[ferredoxin] + 2 S-adenosyl-L-methionine + 4 H(+) = [[Fe-S] cluster scaffold protein] + N(6)-[(R)-dihydrolipoyl]-L-lysyl-[protein] + 4 Fe(3+) + 2 hydrogen sulfide + 2 5'-deoxyadenosine + 2 L-methionine + 2 reduced [2Fe-2S]-[ferredoxin]. It functions in the pathway protein modification; protein lipoylation via endogenous pathway; protein N(6)-(lipoyl)lysine from octanoyl-[acyl-carrier-protein]: step 2/2. Catalyzes the radical-mediated insertion of two sulfur atoms into the C-6 and C-8 positions of the octanoyl moiety bound to the lipoyl domains of lipoate-dependent enzymes, thereby converting the octanoylated domains into lipoylated derivatives. The sequence is that of Lipoyl synthase 2 from Thermosynechococcus vestitus (strain NIES-2133 / IAM M-273 / BP-1).